The chain runs to 358 residues: Malate dehydrogenase 2, glyoxysomal (358 aa).

Residues 1-38 (MEFRGDANKRIAMISAHLQPSFTPQMEAKNSVMGRENC) constitute a glyoxysome transit peptide. Residues 53 to 59 (GAAGGIG) and D79 contribute to the NAD(+) site. Residues R126 and R132 each coordinate substrate. Residues N139 and 162–164 (ISN) contribute to the NAD(+) site. Substrate-binding residues include N164 and R198. H222 serves as the catalytic Proton acceptor. M273 contacts NAD(+).

This sequence belongs to the LDH/MDH superfamily. MDH type 1 family. As to quaternary structure, homodimer.

It localises to the glyoxysome. It carries out the reaction (S)-malate + NAD(+) = oxaloacetate + NADH + H(+). The chain is Malate dehydrogenase 2, glyoxysomal (MDH2) from Brassica napus (Rape).